A 196-amino-acid chain; its full sequence is ATP-dependent Clp protease proteolytic subunit (196 aa).

The active-site Nucleophile is the Ser-96. His-121 is a catalytic residue.

Belongs to the peptidase S14 family. Fourteen ClpP subunits assemble into 2 heptameric rings which stack back to back to give a disk-like structure with a central cavity, resembling the structure of eukaryotic proteasomes.

The protein resides in the cytoplasm. The enzyme catalyses Hydrolysis of proteins to small peptides in the presence of ATP and magnesium. alpha-casein is the usual test substrate. In the absence of ATP, only oligopeptides shorter than five residues are hydrolyzed (such as succinyl-Leu-Tyr-|-NHMec, and Leu-Tyr-Leu-|-Tyr-Trp, in which cleavage of the -Tyr-|-Leu- and -Tyr-|-Trp bonds also occurs).. In terms of biological role, cleaves peptides in various proteins in a process that requires ATP hydrolysis. Has a chymotrypsin-like activity. Plays a major role in the degradation of misfolded proteins. The chain is ATP-dependent Clp protease proteolytic subunit from Streptococcus thermophilus (strain CNRZ 1066).